Here is an 88-residue protein sequence, read N- to C-terminus: Small ribosomal subunit protein bS16 (88 aa).

This sequence belongs to the bacterial ribosomal protein bS16 family.

The polypeptide is Small ribosomal subunit protein bS16 (Staphylococcus saprophyticus subsp. saprophyticus (strain ATCC 15305 / DSM 20229 / NCIMB 8711 / NCTC 7292 / S-41)).